Here is a 433-residue protein sequence, read N- to C-terminus: MSWAQAILLARGASRGWGGICSTALTGAPFSQVPPQAPRGLRCSAAAHNPDSSLVPHPPEPPRRPVKALAVHEELFRPALDGARNKANFVRAVQNFTEYNVHKRGHVDFIYLALRKMREYGVERDLSVYNLLLDIFPKEVFRPRNIFHSIFLHYPRQQECGIAVLEQMENHGVMPNKETEFLLLQIFGRKSYPMLKLVRMKLWFTRFKNINPFPVPRDLPQDPVDLASLALRHMEPDLSARVTTYQMPLLKDSPNAMDPTETHIVGIQSPEQQSALARHDPARPIFVEGPFSLWLRDKCVYYHILRADLLPPEEREVEEIPEEWNLYYPMQLDLAYGRSSWDDYEFNIDEVEEGPVFAICVAGAHDQATLAKWIQGLQETNPALARIPVVFRLSGSSGELLPSSSELEEPPPPPPEGQEEEEDSQQRQQQGQS.

The N-terminal 48 residues, 1–48, are a transit peptide targeting the mitochondrion; that stretch reads MSWAQAILLARGASRGWGGICSTALTGAPFSQVPPQAPRGLRCSAAAH. A disordered region spans residues 36 to 63; the sequence is QAPRGLRCSAAAHNPDSSLVPHPPEPPR. Residue Lys372 forms a Glycyl lysine isopeptide (Lys-Gly) (interchain with G-Cter in ubiquitin) linkage. The tract at residues 397 to 433 is disordered; sequence SGELLPSSSELEEPPPPPPEGQEEEEDSQQRQQQGQS.

Belongs to the ECSIT family. Interacts with MAP3K1, SMAD4 and TRAF6. Interacts with SMAD1 only after BMP4-treatment. Part of the mitochondrial complex I assembly/MCIA complex that comprises at least the core subunits TMEM126B, NDUFAF1, ECSIT and ACAD9 and complement subunits such as COA1 and TMEM186. Interacts with NDUFAF1. Interacts with ACAD9. Interacts with TRIM59. Interacts with TMEM70 and TMEM242. Interacts (when ubiquitinated) with NF-kappa-B subunits RELA and NFKB1. Interacts with RIGI, IFIT1 and MAVS; these interactions promote RLR-mediated type I IFN induction. Interacts with SQSTM1; this interaction inhibits TLR4 signaling via functional regulation of the TRAF6-ECSIT complex. Interacts with cereblon/CRBN; this interaction inhibits the ubiquitination of ECSIT. Post-translationally, ubiquitinated on Lys-372; leading to translocation in the nucleus together with RELA and NFKB1 and expression of NF-kappa-B-dependent genes.

It is found in the cytoplasm. The protein resides in the nucleus. It localises to the mitochondrion. Functionally, adapter protein that plays a role in different signaling pathways including TLRs and IL-1 pathways or innate antiviral induction signaling. Plays a role in the activation of NF-kappa-B by forming a signal complex with TRAF6 and TAK1/MAP3K7 to activate TAK1/MAP3K7 leading to activation of IKKs. Once ubiquitinated, interacts with the dissociated RELA and NFKB1 proteins and translocates to the nucleus where it induces NF-kappa-B-dependent gene expression. Plays a role in innate antiviral immune response by bridging the pattern recognition receptors RIGI and MDA5/IFIT1 to the MAVS complex at the mitochondrion. Promotes proteolytic activation of MAP3K1. Involved in the BMP signaling pathway. Required for normal embryonic development. In terms of biological role, as part of the MCIA complex, involved in the assembly of the mitochondrial complex I. This chain is Evolutionarily conserved signaling intermediate in Toll pathway, mitochondrial, found in Bos taurus (Bovine).